Consider the following 493-residue polypeptide: Ketol-acid reductoisomerase (NADP(+)) (493 aa).

Residues 14–208 (LDQLGRCRFM…GGHRAGVLES (195 aa)) form the KARI N-terminal Rossmann domain. NADP(+) contacts are provided by residues 45-48 (CGAQ), Arg68, Arg76, Ser78, and 108-110 (DKQ). Residue His132 is part of the active site. Gly158 lines the NADP(+) pocket. 2 KARI C-terminal knotted domains span residues 209–345 (SFVA…APKG) and 346–486 (ENIK…MTDM). The Mg(2+) site is built by Asp217, Glu221, Glu390, and Glu394. Ser415 contributes to the substrate binding site.

The protein belongs to the ketol-acid reductoisomerase family. Mg(2+) serves as cofactor.

The catalysed reaction is (2R)-2,3-dihydroxy-3-methylbutanoate + NADP(+) = (2S)-2-acetolactate + NADPH + H(+). It catalyses the reaction (2R,3R)-2,3-dihydroxy-3-methylpentanoate + NADP(+) = (S)-2-ethyl-2-hydroxy-3-oxobutanoate + NADPH + H(+). It functions in the pathway amino-acid biosynthesis; L-isoleucine biosynthesis; L-isoleucine from 2-oxobutanoate: step 2/4. The protein operates within amino-acid biosynthesis; L-valine biosynthesis; L-valine from pyruvate: step 2/4. Involved in the biosynthesis of branched-chain amino acids (BCAA). Catalyzes an alkyl-migration followed by a ketol-acid reduction of (S)-2-acetolactate (S2AL) to yield (R)-2,3-dihydroxy-isovalerate. In the isomerase reaction, S2AL is rearranged via a Mg-dependent methyl migration to produce 3-hydroxy-3-methyl-2-ketobutyrate (HMKB). In the reductase reaction, this 2-ketoacid undergoes a metal-dependent reduction by NADPH to yield (R)-2,3-dihydroxy-isovalerate. The sequence is that of Ketol-acid reductoisomerase (NADP(+)) from Histophilus somni (strain 2336) (Haemophilus somnus).